The primary structure comprises 65 residues: uncharacterized protein (65 aa).

The helical transmembrane segment at Ile-37–Ile-57 threads the bilayer.

It localises to the cell membrane. This is an uncharacterized protein from Bacillus subtilis (strain 168).